The primary structure comprises 345 residues: Sulfate/thiosulfate import ATP-binding protein CysA (345 aa).

In terms of domain architecture, ABC transporter spans 3-237 (IQVSGLCKHF…PRTEFVYQFV (235 aa)). Residue 35–42 (GPSGCGKT) coordinates ATP.

The protein belongs to the ABC transporter superfamily. Sulfate/tungstate importer (TC 3.A.1.6) family. As to quaternary structure, the complex is composed of two ATP-binding proteins (CysA), two transmembrane proteins (CysT and CysW) and a solute-binding protein (CysP).

It localises to the cell inner membrane. It carries out the reaction sulfate(out) + ATP + H2O = sulfate(in) + ADP + phosphate + H(+). The enzyme catalyses thiosulfate(out) + ATP + H2O = thiosulfate(in) + ADP + phosphate + H(+). Functionally, part of the ABC transporter complex CysAWTP involved in sulfate/thiosulfate import. Responsible for energy coupling to the transport system. The protein is Sulfate/thiosulfate import ATP-binding protein CysA of Vibrio vulnificus (strain CMCP6).